Consider the following 284-residue polypeptide: ATP synthase subunit a (284 aa).

Transmembrane regions (helical) follow at residues 55–75 (AIHV…LGLF), 116–136 (IAPL…LKLI), 165–185 (FGMS…VKGV), 196–216 (PFNH…ALII), 234–254 (VVFI…NVPW), and 255–275 (AIFH…LTVV).

Belongs to the ATPase A chain family. As to quaternary structure, F-type ATPases have 2 components, CF(1) - the catalytic core - and CF(0) - the membrane proton channel. CF(1) has five subunits: alpha(3), beta(3), gamma(1), delta(1), epsilon(1). CF(0) has three main subunits: a(1), b(2) and c(9-12). The alpha and beta chains form an alternating ring which encloses part of the gamma chain. CF(1) is attached to CF(0) by a central stalk formed by the gamma and epsilon chains, while a peripheral stalk is formed by the delta and b chains.

It localises to the cell inner membrane. Functionally, key component of the proton channel; it plays a direct role in the translocation of protons across the membrane. In Marinobacter nauticus (strain ATCC 700491 / DSM 11845 / VT8) (Marinobacter aquaeolei), this protein is ATP synthase subunit a.